The chain runs to 265 residues: Type III pantothenate kinase (265 aa).

Position 6-13 (Asp6–Val13) interacts with ATP. Gly112 to Arg115 is a binding site for substrate. Asp114 functions as the Proton acceptor in the catalytic mechanism. Asp134 lines the K(+) pocket. Residue Thr137 participates in ATP binding. Residue Thr189 coordinates substrate.

It belongs to the type III pantothenate kinase family. Homodimer. NH4(+) is required as a cofactor. K(+) serves as cofactor.

The protein resides in the cytoplasm. The enzyme catalyses (R)-pantothenate + ATP = (R)-4'-phosphopantothenate + ADP + H(+). It functions in the pathway cofactor biosynthesis; coenzyme A biosynthesis; CoA from (R)-pantothenate: step 1/5. Catalyzes the phosphorylation of pantothenate (Pan), the first step in CoA biosynthesis. The chain is Type III pantothenate kinase from Streptomyces coelicolor (strain ATCC BAA-471 / A3(2) / M145).